The primary structure comprises 484 residues: 6-phosphogluconate dehydrogenase, decarboxylating (484 aa).

Residues Gly-11–Gly-16, Asn-34–Thr-36, Val-76–Ala-78, and Asn-104 contribute to the NADP(+) site. Residues Asn-104 and Ser-130–Gly-132 each bind substrate. Lys-185 (proton acceptor) is an active-site residue. Residue His-188–Asn-189 coordinates substrate. Glu-192 acts as the Proton donor in catalysis. Substrate contacts are provided by Tyr-193, Lys-262, Arg-289, Arg-447, and His-453.

This sequence belongs to the 6-phosphogluconate dehydrogenase family. As to quaternary structure, homodimer.

It catalyses the reaction 6-phospho-D-gluconate + NADP(+) = D-ribulose 5-phosphate + CO2 + NADPH. Its pathway is carbohydrate degradation; pentose phosphate pathway; D-ribulose 5-phosphate from D-glucose 6-phosphate (oxidative stage): step 3/3. In terms of biological role, catalyzes the oxidative decarboxylation of 6-phosphogluconate to ribulose 5-phosphate and CO(2), with concomitant reduction of NADP to NADPH. The polypeptide is 6-phosphogluconate dehydrogenase, decarboxylating (Aggregatibacter actinomycetemcomitans (Actinobacillus actinomycetemcomitans)).